Reading from the N-terminus, the 802-residue chain is Ent-copalyl diphosphate synthase, chloroplastic (802 aa).

The transit peptide at 1–60 directs the protein to the chloroplast; the sequence is MSLQYHVLNSIPSTTFLSSTKTTISSSFLTISGSPLNVARDKSRSGSIHCSKLRTQEYIN. K245 is a substrate binding site. 2 residues coordinate Mg(2+): D377 and D379. The DXDD motif motif lies at 377 to 380; sequence DIDD. K463 serves as a coordination point for substrate.

This sequence belongs to the terpene synthase family. Tpsc subfamily. Mg(2+) is required as a cofactor. The N-terminus is blocked. As to expression, expressed in roots, leaves, flowers and also in siliques.

It localises to the plastid. It is found in the chloroplast. The enzyme catalyses (2E,6E,10E)-geranylgeranyl diphosphate = ent-copalyl diphosphate. Its pathway is plant hormone biosynthesis; gibberellin biosynthesis. Its activity is regulated as follows. Inhibited by high concentrations of magnesium. Catalyzes the conversion of geranylgeranyl diphosphate to the gibberellin precursor ent-copalyl diphosphate. This is Ent-copalyl diphosphate synthase, chloroplastic (GA1) from Arabidopsis thaliana (Mouse-ear cress).